The sequence spans 518 residues: Putative malate dehydrogenase 1B (518 aa).

It belongs to the LDH/MDH superfamily. MDH type 2 family.

This chain is Putative malate dehydrogenase 1B (MDH1B), found in Homo sapiens (Human).